The chain runs to 2595 residues: Glucosylceramide transporter ABCA12 (2595 aa).

The chain crosses the membrane as a helical span at residues 23-43; that stretch reads PLWTLVLILWPVIIFIILAIT. The span at 109-119 shows a compositional bias: basic and acidic residues; that stretch reads LKKPSNPKRDS. The segment at 109-143 is disordered; that stretch reads LKKPSNPKRDSNLSLRSTQVPERSHTSLATVPPRP. N120, N156, N174, N214, N275, N331, N365, N381, N410, N433, N455, N526, N541, N574, N605, N645, N749, N773, N812, N823, N854, N917, and N960 each carry an N-linked (GlcNAc...) asparagine glycan. Residues 120 to 137 show a composition bias toward polar residues; the sequence is NLSLRSTQVPERSHTSLA. 3 consecutive transmembrane segments (helical) span residues 1062 to 1082, 1109 to 1129, and 1142 to 1162; these read VSYS…AAFV, FAWL…LIVI, and FILF…SYLI. N-linked (GlcNAc...) asparagine glycosylation occurs at N1167. 3 helical membrane passes run 1171–1191, 1197–1217, and 1247–1267; these read IAAL…IVLV, LSYV…SYAS, and FGWL…IAWY. N1319 carries an N-linked (GlcNAc...) asparagine glycan. Residues 1346 to 1577 form the ABC transporter 1 domain; the sequence is VALHGVTKIY…FGDGYHLTLT (232 aa). 1378–1385 is an ATP binding site; that stretch reads GPNGAGKT. N-linked (GlcNAc...) asparagine glycosylation is found at N1524, N1663, N1673, N1686, N1690, and N1704. The disordered stretch occupies residues 1672–1703; it reads SNMSLEHLTQRKVGNPSANGTSTPDDLSVSSS. Residues 1687–1703 show a composition bias toward polar residues; sequence PSANGTSTPDDLSVSSS. The helical transmembrane segment at 1747-1767 threads the bilayer; that stretch reads LIAQVILPIVFVATAMGLGTL. 5 N-linked (GlcNAc...) asparagine glycosylation sites follow: N1819, N1835, N1876, N1921, and N1952. Transmembrane regions (helical) follow at residues 1979–1999, 2035–2055, 2072–2092, 2103–2123, 2143–2163, 2187–2207, and 2270–2290; these read ATIS…GYSV, FIYD…VIAI, LLLL…AGLF, VCVN…VYFL, IFLI…SQQQ, GAMF…RLLI, and IIAV…GLLG. In terms of domain architecture, ABC transporter 2 spans 2254-2489; sequence VQLHRLTKTY…FGRGFTVKVH (236 aa). 2290-2297 is an ATP binding site; sequence GVNGAGKT. Residues N2318, N2542, and N2547 are each glycosylated (N-linked (GlcNAc...) asparagine). Positions 2575–2587 are enriched in polar residues; the sequence is VDTSSQGSTISVD. The disordered stretch occupies residues 2575 to 2595; that stretch reads VDTSSQGSTISVDSQEDQLDS.

It belongs to the ABC transporter superfamily. ABCA family. As to quaternary structure, interacts with NR1H2 and ABCA1; this interaction is required for ABCA1 localization to the cell surface and is necessary for its normal activity and stability. Expressed in a number of other tissues besides skin, including heart, intestine, stomach, and kidney. Expressed mainly in the granular layer of the skin. Expressed in lung. Expressed in alpha and beta cells of pancreatic islets.

It localises to the cytoplasmic vesicle. Its subcellular location is the secretory vesicle membrane. The protein resides in the golgi apparatus membrane. The enzyme catalyses ATP + H2O + phospholipidSide 1 = ADP + phosphate + phospholipidSide 2.. The catalysed reaction is a beta-D-glucosylceramide(in) + ATP + H2O = a beta-D-glucosylceramide(out) + ADP + phosphate + H(+). Its function is as follows. Transports lipids such as glucosylceramides from the outer to the inner leaflet of lamellar granules (LGs) membrane, whereby the lipids are finally transported to the keratinocyte periphery via the trans-Golgi network and LGs and released to the apical surface of the granular keratinocytes to form lipid lamellae in the stratum corneum of the epidermis, which is essential for skin barrier function. In the meantime, participates in the transport of the lamellar granules-associated proteolytic enzymes, in turn regulates desquamation and keratinocyte differentiation. Furthermore, is essential for the regulation of cellular cholesterol homeostasis by regulating ABCA1-dependent cholesterol efflux from macrophages through interaction with NR1H2 and ABCA1. Plays pleiotropic roles in regulating glucose stimulated insulin secretion from beta cells, regulating the morphology and fusion of insulin granules, lipid raft abundance and the actin cytoskeleton. Also involved in lung surfactant biogenesis. In Mus musculus (Mouse), this protein is Glucosylceramide transporter ABCA12.